The primary structure comprises 396 residues: Ribose-phosphate pyrophosphokinase 1, chloroplastic (396 aa).

The transit peptide at 1–36 directs the protein to the chloroplast; the sequence is MPLSYSAAAAAAPSPLAARSRGLLRRPPRSSPVVVR. The Mg(2+) site is built by D204, H206, D215, and D219. Positions 290–305 are binding of phosphoribosylpyrophosphate; it reads GKVAVMMDDMIDTAGT.

This sequence belongs to the ribose-phosphate pyrophosphokinase family. Requires Mg(2+) as cofactor.

It is found in the plastid. The protein localises to the chloroplast. The enzyme catalyses D-ribose 5-phosphate + ATP = 5-phospho-alpha-D-ribose 1-diphosphate + AMP + H(+). This Oryza sativa subsp. japonica (Rice) protein is Ribose-phosphate pyrophosphokinase 1, chloroplastic.